A 337-amino-acid chain; its full sequence is MRVLGIETSCDETGIAIFDDQKGILSHQLYSQVKLHADYGGVVPELASRDHVRKTIPLIQAALREAGLGKDDIDGIAYTAGPGLVGAILVGATIGRSLAMAWNKPAIAVHHMEGHLLAPMLEERAPEFPFVALLVSGGHSMLVRVDGIGSYQLLGESIDDAAGEAFDKTAKLMGLDYPGGPLLSRLAEKGTTGRFTFPRPMTDRPGLDMSFSGLKTFAANTIAANGDDEQTRADIARAFEDAVVDTLAIKCRRALKETGLNRLVVAGGVSANRHLRAQLAELMESLKGEVFYPRTEYCTDNGAMIAYAGMQRLKAGVFEPLAVKAVPRWPLDTLDPI.

Fe cation is bound by residues H111 and H115. Substrate-binding positions include 134-138 (LVSGG), D167, G180, and N272. A Fe cation-binding site is contributed by D300.

Belongs to the KAE1 / TsaD family. It depends on Fe(2+) as a cofactor.

Its subcellular location is the cytoplasm. The enzyme catalyses L-threonylcarbamoyladenylate + adenosine(37) in tRNA = N(6)-L-threonylcarbamoyladenosine(37) in tRNA + AMP + H(+). Its function is as follows. Required for the formation of a threonylcarbamoyl group on adenosine at position 37 (t(6)A37) in tRNAs that read codons beginning with adenine. Is involved in the transfer of the threonylcarbamoyl moiety of threonylcarbamoyl-AMP (TC-AMP) to the N6 group of A37, together with TsaE and TsaB. TsaD likely plays a direct catalytic role in this reaction. The protein is tRNA N6-adenosine threonylcarbamoyltransferase of Aeromonas hydrophila subsp. hydrophila (strain ATCC 7966 / DSM 30187 / BCRC 13018 / CCUG 14551 / JCM 1027 / KCTC 2358 / NCIMB 9240 / NCTC 8049).